Consider the following 566-residue polypeptide: UvrABC system protein C (566 aa).

The GIY-YIG domain occupies 16–93 (EKPGVYLFKK…IQQYKPRYNV (78 aa)). One can recognise a UVR domain in the interval 199-234 (AEVLPKLYEKIEEFSKELMFEKCAHIRDQIIALENL).

It belongs to the UvrC family. As to quaternary structure, interacts with UvrB in an incision complex.

It is found in the cytoplasm. Functionally, the UvrABC repair system catalyzes the recognition and processing of DNA lesions. UvrC both incises the 5' and 3' sides of the lesion. The N-terminal half is responsible for the 3' incision and the C-terminal half is responsible for the 5' incision. This is UvrABC system protein C from Aquifex aeolicus (strain VF5).